Here is a 620-residue protein sequence, read N- to C-terminus: 1-deoxy-D-xylulose-5-phosphate synthase (620 aa).

Residues His80 and 121–123 each bind thiamine diphosphate; that span reads GHS. Asp152 contacts Mg(2+). Thiamine diphosphate contacts are provided by residues 153–154, Asn181, Tyr288, and Glu370; that span reads GA. A Mg(2+)-binding site is contributed by Asn181.

Belongs to the transketolase family. DXPS subfamily. As to quaternary structure, homodimer. Mg(2+) serves as cofactor. Requires thiamine diphosphate as cofactor.

It carries out the reaction D-glyceraldehyde 3-phosphate + pyruvate + H(+) = 1-deoxy-D-xylulose 5-phosphate + CO2. It participates in metabolic intermediate biosynthesis; 1-deoxy-D-xylulose 5-phosphate biosynthesis; 1-deoxy-D-xylulose 5-phosphate from D-glyceraldehyde 3-phosphate and pyruvate: step 1/1. Its function is as follows. Catalyzes the acyloin condensation reaction between C atoms 2 and 3 of pyruvate and glyceraldehyde 3-phosphate to yield 1-deoxy-D-xylulose-5-phosphate (DXP). This chain is 1-deoxy-D-xylulose-5-phosphate synthase, found in Escherichia coli (strain SMS-3-5 / SECEC).